The sequence spans 327 residues: Thioredoxin reductase sirT (327 aa).

FAD contacts are provided by residues 15-18 (AGPA), 37-42 (DTGVFR), His-50, and Ala-115. The cysteines at positions 139 and 142 are disulfide-linked. FAD contacts are provided by residues Asp-289 and 296 to 297 (QV).

The protein belongs to the class-II pyridine nucleotide-disulfide oxidoreductase family. As to quaternary structure, homodimer. Requires FAD as cofactor.

It functions in the pathway mycotoxin biosynthesis. Thioredoxin reductase; part of the gene cluster that mediates the biosynthesis of sirodesmin PL, an epipolythiodioxopiperazine (ETP) characterized by a disulfide bridged cyclic dipeptide and that acts as a phytotoxin which is involved in the blackleg didease of canola. SirD catalyzes the O-prenylation of L-tyrosine (L-Tyr) in the presence of dimethylallyl diphosphate (DMAPP) to yield 4-O-dimethylallyl-L-Tyr, and therefore represents probably the first pathway-specific enzyme in the biosynthesis of sirodesmin PL. 4-O-dimethylallyl-L-Tyr, then undergoes condensation with L-Ser in a reaction catalyzed by the non-ribosomal peptide synthase sirP to form the diketopiperazine (DKP) backbone. Further bishydroxylation of the DKP performed by the cytochrome P450 monooxygenase sirC leads to the production of the intermediate phomamide. This step is essential to form the reactive thiol group required for toxicity of sirodesmin PL. The next steps of sirodesmin biosynthesis are not well understood yet, but some predictions could be made from intermediate compounds identification. Phomamide is converted into phomalizarine via oxidation, probably by sirT. Further oxidation, methylation (by sirM or sirN) and reduction steps convert phomalizarine to deacetyl sirodesmin. Finally, acetyltransferase sirH probably acetylates deacetyl sirodesmin to produce sirodesmin PL. This chain is Thioredoxin reductase sirT, found in Leptosphaeria maculans (Blackleg fungus).